The sequence spans 614 residues: MKGLSSLINRKKDRNDSHLDEIENGVNATEFNSIEMEEQGKKSDFDLSHLEYGPGSLIPNDNNEEVPDLLDEAMQDAKEADESERGMPLMTALKTYPKAAAWSLLVSTTLIQEGYDTAILGAFYALPVFQKKYGSLNSNTGDYEISVSWQIGLCLCYMAGEIVGLQMTGPSVDYMGNRYTLIMALFFLAAFIFILYFCKSLGMIAVGQALCGMPWGCFQCLTVSYASEICPLALRYYLTTYSNLCWAFGQLFAAGIMKNSQNKYANSELGYKLPFALQWIWPLPLAVGIFFAPESPWWLVKKGRIDQARRSLERTLSGKGPEKELLVSMELDKIKTTIEKEQKMSDEGTYWDCVKDGINRRRTRIACLCWIGQCSCGASLIGYSTYFYEKAGVSTDTAFTFSIIQYCLGIAATFISWWASKYCGRFDLYAFGLAFQAIMFFIIGGLGCSDTHGAKMGSGALLMVVAFFYNLGIAPVVFCLVSEIPSSRLRTKTIILARNAYNVIQVVVTVLIMYQLNSEKWNWGAKSGFFWGGFCLATLAWAVVDLPETAGRTFIEINELFRLGVPARKFKSTKVDPFAAAKAAAAEINVKDPKEDLETSVVDEGRNTSSVVNK.

Residues 1–48 (MKGLSSLINRKKDRNDSHLDEIENGVNATEFNSIEMEEQGKKSDFDLS) are disordered. The Cytoplasmic portion of the chain corresponds to 1-108 (MKGLSSLINR…AAAWSLLVST (108 aa)). Positions 38-48 (EQGKKSDFDLS) are enriched in basic and acidic residues. The chain crosses the membrane as a helical span at residues 109–129 (TLIQEGYDTAILGAFYALPVF). Over 130 to 144 (QKKYGSLNSNTGDYE) the chain is Extracellular. Residues 145 to 165 (ISVSWQIGLCLCYMAGEIVGL) form a helical membrane-spanning segment. Residues 166–180 (QMTGPSVDYMGNRYT) are Cytoplasmic-facing. Residues 181–201 (LIMALFFLAAFIFILYFCKSL) form a helical membrane-spanning segment. Residue glycine 202 is a topological domain, extracellular. Residues 203 to 223 (MIAVGQALCGMPWGCFQCLTV) form a helical membrane-spanning segment. Topologically, residues 224–236 (SYASEICPLALRY) are cytoplasmic. Residues 237 to 257 (YLTTYSNLCWAFGQLFAAGIM) traverse the membrane as a helical segment. Topologically, residues 258–272 (KNSQNKYANSELGYK) are extracellular. A helical transmembrane segment spans residues 273-293 (LPFALQWIWPLPLAVGIFFAP). The Cytoplasmic portion of the chain corresponds to 294–364 (ESPWWLVKKG…KDGINRRRTR (71 aa)). The helical transmembrane segment at 365 to 385 (IACLCWIGQCSCGASLIGYST) threads the bilayer. Residues 386 to 398 (YFYEKAGVSTDTA) are Extracellular-facing. A helical membrane pass occupies residues 399-419 (FTFSIIQYCLGIAATFISWWA). The Cytoplasmic segment spans residues 420-427 (SKYCGRFD). Residues 428–448 (LYAFGLAFQAIMFFIIGGLGC) traverse the membrane as a helical segment. At 449–460 (SDTHGAKMGSGA) the chain is on the extracellular side. The chain crosses the membrane as a helical span at residues 461–481 (LLMVVAFFYNLGIAPVVFCLV). The Cytoplasmic segment spans residues 482–493 (SEIPSSRLRTKT). A helical transmembrane segment spans residues 494 to 514 (IILARNAYNVIQVVVTVLIMY). Topologically, residues 515–526 (QLNSEKWNWGAK) are extracellular. The helical transmembrane segment at 527–547 (SGFFWGGFCLATLAWAVVDLP) threads the bilayer. Residues 548–614 (ETAGRTFIEI…GRNTSSVVNK (67 aa)) are Cytoplasmic-facing. The disordered stretch occupies residues 595–614 (EDLETSVVDEGRNTSSVVNK).

It belongs to the major facilitator superfamily. Sugar transporter (TC 2.A.1.1) family.

It localises to the membrane. Functionally, high-affinity uptake of maltose and maltotriose. Also transports turanose but not alpha-methylglucoside, melezitose or trehalose. This chain is Maltose permease MAL31 (MAL31), found in Saccharomyces cerevisiae (strain ATCC 204508 / S288c) (Baker's yeast).